We begin with the raw amino-acid sequence, 1010 residues long: Probable LRR receptor-like serine/threonine-protein kinase At3g47570 (1010 aa).

The signal sequence occupies residues 1–19 (MRLFLLLAFNALMLLETHG). Residues 20 to 645 (FTDETDRQAL…SSRLKKVVIG (626 aa)) are Extracellular-facing. N-linked (GlcNAc...) asparagine glycosylation is found at N48 and N88. 10 LRR repeats span residues 89 to 113 (LSFLVSLDLYENFFGGTIPQEVGQL), 114 to 137 (SRLEYLDMGINYLRGPIPLGLYNC), 139 to 161 (RLLNLRLDSNRLGGSVPSELGSL), 162 to 185 (TNLVQLNLYGNNMRGKLPTSLGNL), 186 to 209 (TLLEQLALSHNNLEGEIPSDVAQL), 211 to 233 (QIWSLQLVANNFSGVFPPALYNL), 234 to 258 (SSLKLLGIGYNHFSGRLRPDLGILL), 259 to 282 (PNLLSFNMGGNYFTGSIPTTLSNI), 283 to 307 (STLERLGMNENNLTGSIPTFGNVPN), and 310 to 333 (LLFLHTNSLGSDSSRDLEFLTSLT). Residue N136 is glycosylated (N-linked (GlcNAc...) asparagine). The N-linked (GlcNAc...) asparagine glycan is linked to N184. 2 N-linked (GlcNAc...) asparagine glycosylation sites follow: N221 and N232. Residues N281 and N294 are each glycosylated (N-linked (GlcNAc...) asparagine). N-linked (GlcNAc...) asparagine glycans are attached at residues N334 and N358. LRR repeat units follow at residues 335–359 (CTQLETLGIGRNRLGGDLPISIANL), 361–384 (AKLVTLDLGGTLISGSIPYDIGNL), 385–408 (INLQKLILDQNMLSGPLPTSLGKL), 410–432 (NLRYLSLFSNRLSGGIPAFIGNM), 433–455 (TMLETLDLSNNGFEGIVPTSLGN), 457–480 (SHLLELWIGDNKLNGTIPLEIMKI), 481–504 (QQLLRLDMSGNSLIGSLPQDIGAL), 505–528 (QNLGTLSLGDNKLSGKLPQTLGNC), 530–551 (TMESLFLEGNLFYGDIPDLKGL), 552–574 (VGVKEVDLSNNDLSGSIPEYFAS), and 575–600 (FSKLEYLNLSFNNLEGKVPVKGIFEN). 3 N-linked (GlcNAc...) asparagine glycosylation sites follow: N431, N455, and N470. Residues N582 and N600 are each glycosylated (N-linked (GlcNAc...) asparagine). The chain crosses the membrane as a helical span at residues 646–666 (VSVGITLLLLLFMASVTLIWL). Topologically, residues 667-1010 (RKRKKNKETN…FFKASRTTWR (344 aa)) are cytoplasmic. A Phosphothreonine modification is found at T699. The region spanning 702–1002 (FSSSNMVGSG…ELISIRERFF (301 aa)) is the Protein kinase domain. ATP contacts are provided by residues 708-716 (VGSGSFGTV) and K731. Phosphotyrosine occurs at positions 781 and 826. The active-site Proton acceptor is the D839. At Y887 the chain carries Phosphotyrosine.

Belongs to the protein kinase superfamily. Ser/Thr protein kinase family.

Its subcellular location is the cell membrane. The enzyme catalyses L-seryl-[protein] + ATP = O-phospho-L-seryl-[protein] + ADP + H(+). It carries out the reaction L-threonyl-[protein] + ATP = O-phospho-L-threonyl-[protein] + ADP + H(+). The sequence is that of Probable LRR receptor-like serine/threonine-protein kinase At3g47570 from Arabidopsis thaliana (Mouse-ear cress).